Consider the following 445-residue polypeptide: Tubulin beta-2A chain (445 aa).

The MREI motif motif lies at M1–I4. Residue Q11 participates in GTP binding. A Phosphoserine modification is found at S40. Residue K58 is modified to N6-acetyllysine; alternate. N6-succinyllysine; alternate is present on K58. A Glycyl lysine isopeptide (Lys-Gly) (interchain with G-Cter in ubiquitin); alternate cross-link involves residue K58. GTP-binding residues include E69, S138, G142, T143, and G144. E69 lines the Mg(2+) pocket. S172 is subject to Phosphoserine; by CDK1. GTP is bound by residues N204 and N226. A phosphothreonine mark is found at T285 and T290. R318 bears the Omega-N-methylarginine mark. A Glycyl lysine isopeptide (Lys-Gly) (interchain with G-Cter in ubiquitin) cross-link involves residue K324. Residues Y422–A445 form a disordered region. The segment covering T429 to A445 has biased composition (acidic residues). E438 carries the 5-glutamyl polyglutamate modification.

The protein belongs to the tubulin family. In terms of assembly, interacts with ZNRF1. Part of a complex composed at least of ASH2L, EMSY, HCFC1, HSPA8, CCAR2, MATR3, MKI67, RBBP5, TUBB2A, WDR5 and ZNF335; this complex may have a histone H3-specific methyltransferase activity. Dimer of alpha and beta chains. A typical microtubule is a hollow water-filled tube with an outer diameter of 25 nm and an inner diameter of 15 nM. Alpha-beta heterodimers associate head-to-tail to form protofilaments running lengthwise along the microtubule wall with the beta-tubulin subunit facing the microtubule plus end conferring a structural polarity. Microtubules usually have 13 protofilaments but different protofilament numbers can be found in some organisms and specialized cells. It depends on Mg(2+) as a cofactor. Post-translationally, some glutamate residues at the C-terminus are polyglutamylated, resulting in polyglutamate chains on the gamma-carboxyl group. Polyglutamylation plays a key role in microtubule severing by spastin (SPAST). SPAST preferentially recognizes and acts on microtubules decorated with short polyglutamate tails: severing activity by SPAST increases as the number of glutamates per tubulin rises from one to eight, but decreases beyond this glutamylation threshold. Glutamylation is also involved in cilia motility. Some glutamate residues at the C-terminus are monoglycylated but not polyglycylated due to the absence of functional TTLL10 in human. Monoglycylation is mainly limited to tubulin incorporated into cilia and flagella axonemes, which is required for their stability and maintenance. Flagella glycylation controls sperm motility. Both polyglutamylation and monoglycylation can coexist on the same protein on adjacent residues, and lowering glycylation levels increases polyglutamylation, and reciprocally. In terms of processing, phosphorylated on Ser-172 by CDK1 during the cell cycle, from metaphase to telophase, but not in interphase. This phosphorylation inhibits tubulin incorporation into microtubules. High expression in brain, where it represents 30% of all beta-tubulins.

It is found in the cytoplasm. It localises to the cytoskeleton. Functionally, tubulin is the major constituent of microtubules, a cylinder consisting of laterally associated linear protofilaments composed of alpha- and beta-tubulin heterodimers. Microtubules grow by the addition of GTP-tubulin dimers to the microtubule end, where a stabilizing cap forms. Below the cap, tubulin dimers are in GDP-bound state, owing to GTPase activity of alpha-tubulin. In Homo sapiens (Human), this protein is Tubulin beta-2A chain (TUBB2A).